The following is a 486-amino-acid chain: MKEIKHFISGELVGSASGKLFDNVSPANGQVIGRVHEAGRAEVDAAVRAARAALKGPWGKMTVAERAEILHRVADGITARFGEFLEARMPGHRQAEVAGQPHRHSARRANFKVFADLLKNVANEAFEMATPDGAGALNYGVRRPKGVIGVISPWNLPLLLMTWKVGPALACGNCVVVKPSEETPLTATLLGEVMQAAGVPAGVYNVVHGFGGDSAGAFLTEHPDVDAYTFTGETGTGETIMRAAAKGVRQVSLELGGKNAGIVFADCDMDKAIEGTLRSAFANCGQVCLGTERVYVERPIFDAFVARLKAGAEALKIGEPNDPEANFGPLISHKPREKVPSYYQQAVDDGATVVTGGGVPEMPAHLAGGAWVQPTIWTGLADDSAVVTEEIFGPCCHIRPFDSEEEAIELANSLPYGLASAIWTENVRRAHRVAGQIEAGIVWVNSWFLRDLRTAFGGSKQSGIGREGGVHSLEFYTELKNICVKL.

Active-site residues include glutamate 254 and cysteine 288.

Belongs to the aldehyde dehydrogenase family. Homodimer.

The enzyme catalyses (2Z,4E)-2-hydroxy-6-oxohexa-2,4-dienoate + NAD(+) + H2O = (2Z,4E)-2-hydroxyhexa-2,4-dienedioate + NADH + 2 H(+). It participates in aromatic compound metabolism; benzoate degradation via hydroxylation. Its function is as follows. 2-hydroxymuconic acid semialdehyde can be converted to 2-hydroxypent-2,4-dienoate either directly by the action of 2-hydroxymuconic semialdehyde hydrolase (HMSH) or by the action of three sequential enzymes, the first of which is HMSD. Can oxidize not only 2-hydroxymuconic semialdehyde and its analogs but also benzaldehyde and its analogs. This Pseudomonas putida (Arthrobacter siderocapsulatus) protein is 2-hydroxymuconic semialdehyde dehydrogenase (xylG).